A 142-amino-acid polypeptide reads, in one-letter code: MAKKIEAYIKLQVAAGAANPSPPVGPALGQKGVNIMEFCKAFNARTEKFEKGMPIPVVITVYNDRSFTFETKTPPASFLLLKAVGLKSGSGRPNTQKVGTIKRSAVQEIAETKAADMTGADIEAMTRSIEGTARSMGLVVED.

The protein belongs to the universal ribosomal protein uL11 family. As to quaternary structure, part of the ribosomal stalk of the 50S ribosomal subunit. Interacts with L10 and the large rRNA to form the base of the stalk. L10 forms an elongated spine to which L12 dimers bind in a sequential fashion forming a multimeric L10(L12)X complex. One or more lysine residues are methylated.

Forms part of the ribosomal stalk which helps the ribosome interact with GTP-bound translation factors. The sequence is that of Large ribosomal subunit protein uL11 from Shewanella frigidimarina (strain NCIMB 400).